A 175-amino-acid polypeptide reads, in one-letter code: NADH-ubiquinone oxidoreductase chain 6 (175 aa).

6 consecutive transmembrane segments (helical) span residues 1-21, 25-45, 47-67, 87-107, 116-136, and 149-169; these read MMAYIGFILSIMFVISFVGFS, SPIYGGLVLIMSGGFGCGIVM, FGGSFLGLMVFLIYLGGMLVV, AAVLGAFVLGVLMEVVLVLYV, VFNFSGVGDWAVSDNGGFGVF, and YGVWIIIVTGWSLFVGVLVIL.

The protein belongs to the complex I subunit 6 family. Core subunit of respiratory chain NADH dehydrogenase (Complex I) which is composed of 45 different subunits.

The protein resides in the mitochondrion inner membrane. The enzyme catalyses a ubiquinone + NADH + 5 H(+)(in) = a ubiquinol + NAD(+) + 4 H(+)(out). Functionally, core subunit of the mitochondrial membrane respiratory chain NADH dehydrogenase (Complex I) which catalyzes electron transfer from NADH through the respiratory chain, using ubiquinone as an electron acceptor. Essential for the catalytic activity and assembly of complex I. This chain is NADH-ubiquinone oxidoreductase chain 6 (MT-ND6), found in Ceratotherium simum (White rhinoceros).